Consider the following 203-residue polypeptide: MSGLIGKKIGMTSIFDENGKNIPCTVIQAGPCVVTQVRTKEVDGYEALQLGFDDKKTVGKAAEGHAKKAGTVAKRKVVEFQGYNEDYKLGDSVTVEHFKEGEFVDIAGTSKGKGFQGVVKRHGFGGVGQATHGQHNRLRAPGSIGAASYPARVFKGMKMAGRMGGERVKIENLRVLKVVADKNLLVIKGCVPGSKNSYVIISK.

The protein belongs to the universal ribosomal protein uL3 family. As to quaternary structure, part of the 50S ribosomal subunit. Forms a cluster with proteins L14 and L19.

Its function is as follows. One of the primary rRNA binding proteins, it binds directly near the 3'-end of the 23S rRNA, where it nucleates assembly of the 50S subunit. The polypeptide is Large ribosomal subunit protein uL3 (Christiangramia forsetii (strain DSM 17595 / CGMCC 1.15422 / KT0803) (Gramella forsetii)).